The primary structure comprises 201 residues: uncharacterized protein (201 aa).

Its function is as follows. May have a role in tissue tropism within the insect larvae. This is an uncharacterized protein from Lepidoptera (butterflies and moths).